Reading from the N-terminus, the 1259-residue chain is MELAAWCRWGLLLALLPSGAAGTQVCTGTDMKLRLPASPETHLDMLRHLYQGCQVVQGNLELTYLPANASLSFLQDIQEVQGYVLIAHSQVRQIPLQRLRIVRGTQLFEDNYALAVLDNGDPLEGGIPAPGAAQGGLRELQLRSLTEILKGGVLIQRSPQLCHQDTILWKDVFHKNNQLALTLIDTNRFSACPPCSPACKDAHCWGASSGDCQSLTRTVCAGGCARCKGPQPTDCCHEQCAAGCTGPKHSDCLACLHFNHSGICELHCPALVTYNTDTFESMPNPEGRYTFGASCVTSCPYNYLSTDVGSCTLVCPLNNQEVTAEDGTQRCEKCSKPCARVCYGLGMEHLREVRAVTSANIQEFAGCKKIFGSLAFLPESFDGDPASNTAPLQPEQLRVFEALEEITGYLYISAWPDSLPNLSVFQNLRVIRGRVLHDGAYSLTLQGLGISWLGLRSLRELGSGLALIHRNARLCFVHTVPWDQLFRNPHQALLHSANRPEEECVGEGLACYPCAHGHCWGPGPTQCVNCSQFLRGQECVEECRVLQGLPREYVKDRYCLPCHSECQPQNGSVTCFGSEADQCVACAHYKDPPFCVARCPSGVKPDLSFMPIWKFADEEGTCQPCPINCTHSCADLDEKGCPAEQRASPVTSIIAAVVGILLAVVVGLVLGILIKRRRQKIRKYTMRRLLQETELVEPLTPSGAMPNQAQMRILKETELRKVKVLGSGAFGTVYKGIWIPDGENVKIPVAIKVLRENTSPKANKEILDEAYVMAGVGSPYVSRLLGICLTSTVQLVTQLMPYGCLLDHVREHRGRLGSQDLLNWCVQIAKGMSYLEDVRLVHRDLAARNVLVKSPNHVKITDFGLARLLDIDETEYHADGGKVPIKWMALESIPPRRFTHQSDVWSYGVTVWELMTFGAKPYDGIPAREIPDLLEKGERLPQPPICTIDVYMIMVKCWMIDSECRPRFRELVAEFSRMARDPQRFVVIQNEDLGPASPLDSTFYRSLLEDDDMGDLVDAEEYLVPQQGFFCPEPTPGAGGTAHRRHRSSSTRNGGGELTLGLEPSEEEPPKSPLAPSEGAGSDVFDGDLGMGAAKGLQSLPSQDPSPLQRYSEDPTVPLPPETDGKVAPLTCSPQPEYVNQPEVWPQPPLALEGPLPPSRPAGATLERPKTLSPKTLSPGKNGVVKDVFAFGSAVENPEYLAPRGRAAPQPHPPPAFSPAFDNLYYWDQDPSERGSPPSTFEGTPTAENPEYLGLDVPV.

A signal peptide spans 1–22; the sequence is MELAAWCRWGLLLALLPSGAAG. Residues 23–653 lie on the Extracellular side of the membrane; sequence TQVCTGTDMK…EQRASPVTSI (631 aa). A disulfide bridge connects residues C26 and C53. A glycan (N-linked (GlcNAc...) asparagine) is linked at N68. Disulfide bonds link C162/C192, C195/C204, C199/C212, C220/C227, C224/C235, C236/C244, C240/C252, C255/C264, C268/C295, C299/C311, C315/C331, C334/C338, and C342/C367. At T182 the chain carries Phosphothreonine. The N-linked (GlcNAc...) asparagine glycan is linked to N259. A glycan (N-linked (GlcNAc...) asparagine) is linked at N421. Cystine bridges form between C475-C504, C511-C519, and C514-C527. N529 carries N-linked (GlcNAc...) asparagine glycosylation. 8 cysteine pairs are disulfide-bonded: C530-C539, C543-C559, C562-C575, C566-C583, C586-C595, C599-C622, C625-C633, and C629-C641. N570 is a glycosylation site (N-linked (GlcNAc...) asparagine). N-linked (GlcNAc...) asparagine glycosylation occurs at N628. A helical transmembrane segment spans residues 654–674; the sequence is IAAVVGILLAVVVGLVLGILI. A required for interaction with KPNB1 and EEA1 region spans residues 675–688; it reads KRRRQKIRKYTMRR. A Nuclear localization signal motif is present at residues 675-688; that stretch reads KRRRQKIRKYTMRR. Residues 675-1259 lie on the Cytoplasmic side of the membrane; it reads KRRRQKIRKY…PEYLGLDVPV (585 aa). The Protein kinase domain maps to 719 to 986; sequence LRKVKVLGSG…RMARDPQRFV (268 aa). ATP contacts are provided by residues 725-733 and K752; that span reads LGSGAFGTV. Residue D844 is the Proton acceptor of the active site. Position 876 is a phosphotyrosine (Y876). The tract at residues 1027–1183 is disordered; that stretch reads QGFFCPEPTP…PKTLSPGKNG (157 aa). Phosphoserine is present on residues S1077, S1082, and S1106. Residue Y1111 is modified to Phosphotyrosine. Y1138 carries the post-translational modification Phosphotyrosine; by autocatalysis. Residues 1145-1160 are compositionally biased toward pro residues; the sequence is WPQPPLALEGPLPPSR. Residue T1165 is modified to Phosphothreonine. The interaction with PIK3C2B stretch occupies residues 1199–1201; the sequence is EYL. Phosphotyrosine is present on Y1200. Residues 1203–1259 are disordered; the sequence is PRGRAAPQPHPPPAFSPAFDNLYYWDQDPSERGSPPSTFEGTPTAENPEYLGLDVPV. Residues 1237–1247 show a composition bias toward polar residues; that stretch reads PPSTFEGTPTA. At Y1252 the chain carries Phosphotyrosine; by autocatalysis.

This sequence belongs to the protein kinase superfamily. Tyr protein kinase family. EGF receptor subfamily. In terms of assembly, homodimer. Heterodimer with EGFR, ERBB3 and ERBB4. Part of a complex with EGFR and either PIK3C2A or PIK3C2B. May interact with PIK3C2B when phosphorylated on Tyr-1200. Interacts with PRKCABP and PLXNB1. Interacts (when phosphorylated on Tyr-1252) with MEMO1. Interacts with MUC1. Interacts (when phosphorylated on Tyr-1138) with GRB7 (via SH2 domain). Interacts (when phosphorylated on Tyr-1252) with ERBIN. Interacts with SRC, KPNB1, PTK6, RANBP2, EEA1, CRM1, CLTC, RPA194, MYOC and ACTB. Interacts (preferentially with the tyrosine phosphorylated form) with CPNE3; this interaction occurs at the cell membrane and is increased in a growth factor heregulin-dependent manner. Interacts with HSP90AA1 and HSP90AB1 in an ATP-dependent manner; the interaction suppresses ERBB2 kinase activity. Interacts with SORL1; this interaction regulates ERBB2 subcellular distribution by promoting its recycling after internalization from endosomes back to the plasma membrane, hence stimulates ERBB2-mediated signaling. Interacts with SH3BGRL. Interacts with ROR1. Autophosphorylated. Autophosphorylation occurs in trans, i.e. one subunit of the dimeric receptor phosphorylates tyrosine residues on the other subunit. Ligand-binding increases phosphorylation on tyrosine residues. Signaling via SEMA4C promotes phosphorylation at Tyr-1252. Dephosphorylated by PTPN12.

It localises to the cell membrane. The protein localises to the cell projection. Its subcellular location is the ruffle membrane. The protein resides in the early endosome. It is found in the cytoplasm. It localises to the perinuclear region. The protein localises to the nucleus. The catalysed reaction is L-tyrosyl-[protein] + ATP = O-phospho-L-tyrosyl-[protein] + ADP + H(+). In terms of biological role, protein tyrosine kinase that is part of several cell surface receptor complexes, but that apparently needs a coreceptor for ligand binding. Essential component of a neuregulin-receptor complex, although neuregulins do not interact with it alone. GP30 is a potential ligand for this receptor. Regulates outgrowth and stabilization of peripheral microtubules (MTs). Upon ERBB2 activation, the MEMO1-RHOA-DIAPH1 signaling pathway elicits the phosphorylation and thus the inhibition of GSK3B at cell membrane. This prevents the phosphorylation of APC and CLASP2, allowing its association with the cell membrane. In turn, membrane-bound APC allows the localization of MACF1 to the cell membrane, which is required for microtubule capture and stabilization. Functionally, in the nucleus is involved in transcriptional regulation. Associates with the 5'-TCAAATTC-3' sequence in the PTGS2/COX-2 promoter and activates its transcription. Implicated in transcriptional activation of CDKN1A; the function involves STAT3 and SRC. Involved in the transcription of rRNA genes by RNA Pol I and enhances protein synthesis and cell growth. This is Receptor tyrosine-protein kinase erbB-2 (ERBB2) from Canis lupus familiaris (Dog).